The sequence spans 603 residues: Beta-glucuronidase (603 aa).

Residues D163 and N412 each contribute to the D-glucuronate site. Catalysis depends on E413, which acts as the Proton donor. D-glucuronate is bound by residues N466, Y472, E504, W549, and K568. The active-site Nucleophile is the E504. An N-K motif motif is present at residues 566-568 (NKK).

It belongs to the glycosyl hydrolase 2 family. Homotetramer.

It catalyses the reaction a beta-D-glucuronoside + H2O = D-glucuronate + an alcohol. The catalysed reaction is 4-methylumbelliferone beta-D-glucuronate + H2O = 4-methylumbelliferone + D-glucuronate. With respect to regulation, potently inhibited by a set of synthetic compounds like thio-urea derivatives and analogs, and uronic isofagomine (UIFG) derivatives. Inhibitors of gut microbial beta-glucuronidases block the reactivation of glucuronidated cancer drugs, and thereby alleviate drug-induced GI toxicity. Functionally, displays beta-glucuronidase activity with the artificial substrate p-nitrophenyl-beta-D-glucuronide (PNPG) and with 4-methylumbelliferyl-glucuronide. Is likely capable of scavenging glucuronate from a range of chemically distinct xenobiotic and endobiotic glucuronides present in the gastrointestinal (GI) tract, to be able to utilize these diverse sources of carbon. As part of the GI microbiome, this enzyme is able to reactivate glucuronide drug conjugates, such reactivated compounds can significantly damage the GI tract. The sequence is that of Beta-glucuronidase (uidA) from Escherichia coli (strain K12).